The following is a 562-amino-acid chain: MSGSYGGGGYGGRGGGGGGYSNGYDRNGGGYSNNYSSHGGSNGYGGGGGGYGGGGGGYGGGGYGGGGGGDRMSALGAGLQKQNWDMSALPKFEKSFYQEHPSVANRSPAEVDKFRADHSIAVFGNNVPKPVETFDEAGFPRYVMDEVKAQGFPAPTAIQSQGWPMALSGRDVVGIAETGSGKTLTYCLPAIVHINAQPLLAPGDGPIVLILAPTRELAVQIQQEISKFGKSSRIRNTCVYGGVPKGPQIRDLSRGVEVCIATPGRLIDMLESGKTNLRRVTYLVLDEADRMLDMGFEPQIRKIIGQIRPDRQTLMWSATWPKEVRNLAADFLTDFIQVNIGSMDLAANHRITQIVEVVSESEKRDRMIKHLEKIMEGRENQNKILIFTGTKRVADDITRFLRQDGWPALSIHGDKQQNERDWVLDQFKTGKSPIMVATDVASRGIDVRNITHVLNYDYPNNSEDYIHRIGRTGRAGAKGTAITFFTTDNSKQARELVGVLQEAKQQIDPRLAEMARYSGGGGGRFGGYRGRGGGGWRGGRGGGGGGGSVGGANALPLNNRRW.

The short motif at 132 to 160 (ETFDEAGFPRYVMDEVKAQGFPAPTAIQS) is the Q motif element. A Helicase ATP-binding domain is found at 163-338 (WPMALSGRDV…ADFLTDFIQV (176 aa)). Position 176 to 183 (176 to 183 (AETGSGKT)) interacts with ATP. Residues 286-289 (DEAD) carry the DEAD box motif. The Helicase C-terminal domain occupies 370–515 (HLEKIMEGRE…QIDPRLAEMA (146 aa)). The interval 526 to 548 (GGYRGRGGGGWRGGRGGGGGGGS) is RNA-binding RGG-box. The span at 536–550 (WRGGRGGGGGGGSVG) shows a compositional bias: gly residues. The disordered stretch occupies residues 536–562 (WRGGRGGGGGGGSVGGANALPLNNRRW).

This sequence belongs to the DEAD box helicase family. DDX5/DBP2 subfamily. Associates with polysomes.

Its subcellular location is the cytoplasm. The protein localises to the nucleus. It carries out the reaction ATP + H2O = ADP + phosphate + H(+). Its function is as follows. ATP-dependent RNA helicase involved nonsense-mediated mRNA decay and ribosome biogenesis through rRNA processing. The chain is ATP-dependent RNA helicase dbp2 (drh-1) from Neurospora crassa (strain ATCC 24698 / 74-OR23-1A / CBS 708.71 / DSM 1257 / FGSC 987).